Reading from the N-terminus, the 213-residue chain is Uracil phosphoribosyltransferase (213 aa).

Residues Arg78, Arg103, and 131 to 139 (DPMLATGGT) each bind 5-phospho-alpha-D-ribose 1-diphosphate. Residues Ile197 and 202–204 (GDA) each bind uracil. Asp203 is a 5-phospho-alpha-D-ribose 1-diphosphate binding site.

The protein belongs to the UPRTase family. The cofactor is Mg(2+).

It catalyses the reaction UMP + diphosphate = 5-phospho-alpha-D-ribose 1-diphosphate + uracil. It functions in the pathway pyrimidine metabolism; UMP biosynthesis via salvage pathway; UMP from uracil: step 1/1. Its activity is regulated as follows. Allosterically activated by GTP. Functionally, catalyzes the conversion of uracil and 5-phospho-alpha-D-ribose 1-diphosphate (PRPP) to UMP and diphosphate. The protein is Uracil phosphoribosyltransferase of Bifidobacterium adolescentis (strain ATCC 15703 / DSM 20083 / NCTC 11814 / E194a).